Here is a 345-residue protein sequence, read N- to C-terminus: Phosphoribosylformylglycinamidine cyclo-ligase (345 aa).

The protein belongs to the AIR synthase family.

It localises to the cytoplasm. It catalyses the reaction 2-formamido-N(1)-(5-O-phospho-beta-D-ribosyl)acetamidine + ATP = 5-amino-1-(5-phospho-beta-D-ribosyl)imidazole + ADP + phosphate + H(+). It participates in purine metabolism; IMP biosynthesis via de novo pathway; 5-amino-1-(5-phospho-D-ribosyl)imidazole from N(2)-formyl-N(1)-(5-phospho-D-ribosyl)glycinamide: step 2/2. The polypeptide is Phosphoribosylformylglycinamidine cyclo-ligase (Escherichia coli O7:K1 (strain IAI39 / ExPEC)).